Reading from the N-terminus, the 187-residue chain is Homeobox protein engrailed-like ceh-16 (187 aa).

Disordered regions lie at residues 14–43, 60–100, and 144–167; these read PYPC…NGTP, SDRP…DQLD, and KSTS…HPSI. The span at 20–39 shows a compositional bias: low complexity; the sequence is PTISTPATSPSSISPTFASP. Positions 87-146 form a DNA-binding region, homeobox; that stretch reads EKRPRTAFTGDQLDRLKTEFRESRYLTEKRRQELAHELGLNESQIKIWFQNKRAKLKKST. Polar residues predominate over residues 145 to 163; that stretch reads STSSVPRDRCSSVTPNPHN.

The protein belongs to the engrailed homeobox family. Expressed in seam cells.

The protein resides in the nucleus. The protein localises to the cytoplasm. In terms of biological role, transcriptional regulator which binds to DNA to regulate gene expression and promote seam cell development and differentiation during embryogenesis. Plays a role in maintaining the boundaries between the lateral rows of seam cells and the ventral and dorsal row of epidermal cells during embryonic development. Negatively regulates the expression of the fusion effector protein eff-1 to prevent seam cell fusion with the dorsal and ventral epidermal cells during embryonic elongation. Positively regulates seam cell self-renewal and expansion during the L2 larval stage to promote seam cell development. This role does not seem to be via regulation of eff-1 expression. Specifically, it is required for the asymmetric division of the V5.p seam cell during the L2 larval stage, and in turn the asymmetric nuclear distribution of pop-1 in V5.p daughter cells. In Caenorhabditis elegans, this protein is Homeobox protein engrailed-like ceh-16.